A 381-amino-acid chain; its full sequence is Lipid-A-disaccharide synthase (381 aa).

The protein belongs to the LpxB family.

It catalyses the reaction a lipid X + a UDP-2-N,3-O-bis[(3R)-3-hydroxyacyl]-alpha-D-glucosamine = a lipid A disaccharide + UDP + H(+). The protein operates within bacterial outer membrane biogenesis; LPS lipid A biosynthesis. In terms of biological role, condensation of UDP-2,3-diacylglucosamine and 2,3-diacylglucosamine-1-phosphate to form lipid A disaccharide, a precursor of lipid A, a phosphorylated glycolipid that anchors the lipopolysaccharide to the outer membrane of the cell. The polypeptide is Lipid-A-disaccharide synthase (Rickettsia bellii (strain OSU 85-389)).